A 515-amino-acid polypeptide reads, in one-letter code: Bifunctional purine biosynthesis protein PurH (515 aa).

An MGS-like domain is found at 1–144; the sequence is MGRKALISVS…KNHKFVTIIV (144 aa).

This sequence belongs to the PurH family.

The catalysed reaction is (6R)-10-formyltetrahydrofolate + 5-amino-1-(5-phospho-beta-D-ribosyl)imidazole-4-carboxamide = 5-formamido-1-(5-phospho-D-ribosyl)imidazole-4-carboxamide + (6S)-5,6,7,8-tetrahydrofolate. The enzyme catalyses IMP + H2O = 5-formamido-1-(5-phospho-D-ribosyl)imidazole-4-carboxamide. It participates in purine metabolism; IMP biosynthesis via de novo pathway; 5-formamido-1-(5-phospho-D-ribosyl)imidazole-4-carboxamide from 5-amino-1-(5-phospho-D-ribosyl)imidazole-4-carboxamide (10-formyl THF route): step 1/1. The protein operates within purine metabolism; IMP biosynthesis via de novo pathway; IMP from 5-formamido-1-(5-phospho-D-ribosyl)imidazole-4-carboxamide: step 1/1. In Persephonella marina (strain DSM 14350 / EX-H1), this protein is Bifunctional purine biosynthesis protein PurH.